The following is an 866-amino-acid chain: DNA mismatch repair protein MutS (866 aa).

Residue 618-625 (GPNMSGKS) coordinates ATP.

Belongs to the DNA mismatch repair MutS family.

Functionally, this protein is involved in the repair of mismatches in DNA. It is possible that it carries out the mismatch recognition step. This protein has a weak ATPase activity. This is DNA mismatch repair protein MutS from Flavobacterium psychrophilum (strain ATCC 49511 / DSM 21280 / CIP 103535 / JIP02/86).